Here is a 355-residue protein sequence, read N- to C-terminus: Arginine kinase (355 aa).

In terms of domain architecture, Phosphagen kinase N-terminal spans 8 to 90 (KLQAGFKKLE…FDPIIEDYHV (83 aa)). An L-arginine-binding site is contributed by 63-67 (GVGIY). A Phosphagen kinase C-terminal domain is found at 118-355 (YVISTRVRCG…LQLIKMEKEM (238 aa)). ATP contacts are provided by residues 121 to 125 (STRVR) and His-184. Glu-224 contacts L-arginine. ATP is bound at residue Arg-228. Cys-270 provides a ligand contact to L-arginine. ATP-binding positions include 279 to 283 (RASVH) and 308 to 313 (RGTRGE). Position 313 (Glu-313) interacts with L-arginine.

It belongs to the ATP:guanido phosphotransferase family. In terms of assembly, monomer.

It carries out the reaction L-arginine + ATP = N(omega)-phospho-L-arginine + ADP + H(+). The chain is Arginine kinase from Penaeus japonicus (Kuruma prawn).